We begin with the raw amino-acid sequence, 189 residues long: Elongation factor P (189 aa).

At K34 the chain carries N6-(3,6-diaminohexanoyl)-5-hydroxylysine.

The protein belongs to the elongation factor P family. Post-translationally, may be beta-lysylated on the epsilon-amino group of Lys-34 by the combined action of EpmA and EpmB, and then hydroxylated on the C5 position of the same residue by EpmC (if this protein is present). Lysylation is critical for the stimulatory effect of EF-P on peptide-bond formation. The lysylation moiety may extend toward the peptidyltransferase center and stabilize the terminal 3-CCA end of the tRNA. Hydroxylation of the C5 position on Lys-34 may allow additional potential stabilizing hydrogen-bond interactions with the P-tRNA.

The protein localises to the cytoplasm. The protein operates within protein biosynthesis; polypeptide chain elongation. Involved in peptide bond synthesis. Alleviates ribosome stalling that occurs when 3 or more consecutive Pro residues or the sequence PPG is present in a protein, possibly by augmenting the peptidyl transferase activity of the ribosome. Modification of Lys-34 is required for alleviation. The sequence is that of Elongation factor P from Francisella tularensis subsp. tularensis (strain FSC 198).